Here is a 78-residue protein sequence, read N- to C-terminus: RNA-binding protein Hfq (78 aa).

The region spanning 10-69 is the Sm domain; that stretch reads DPFLNTLRKEHVPVSIYLVNGIKLQGQIESFDQYVVLLRNTVTQMVYKHAISTVVPARAV.

Belongs to the Hfq family. Homohexamer.

In terms of biological role, RNA chaperone that binds small regulatory RNA (sRNAs) and mRNAs to facilitate mRNA translational regulation in response to envelope stress, environmental stress and changes in metabolite concentrations. Also binds with high specificity to tRNAs. The protein is RNA-binding protein Hfq of Bordetella bronchiseptica (strain ATCC BAA-588 / NCTC 13252 / RB50) (Alcaligenes bronchisepticus).